Reading from the N-terminus, the 801-residue chain is Protocadherin beta-8 (801 aa).

Positions 1 to 29 (MEASGKLICRQRQVLFSFLLLGLSLAGAA) are cleaved as a signal peptide. Residues 30–691 (EPRSYSVVEE…GQADSLTVYL (662 aa)) are Extracellular-facing. 5 consecutive Cadherin domains span residues 36-134 (VVEE…SPVF), 139-243 (MLVK…APEF), 248-348 (YRVQ…APEV), 353-452 (FTSP…APAF), and 457-562 (YTLF…SPFV). Cys97 and Cys103 are joined by a disulfide. Asn419 and Asn437 each carry an N-linked (GlcNAc...) asparagine glycan. Asn568 carries N-linked (GlcNAc...) asparagine glycosylation. In terms of domain architecture, Cadherin 6 spans 569–672 (GSAPCTELVP…LVDGFSQPYL (104 aa)). A helical transmembrane segment spans residues 692-710 (VVALASVSSLFLFSVLLFV). Over 711–801 (AVLLCRRSRA…NGFGFSLQLK (91 aa)) the chain is Cytoplasmic.

In terms of assembly, forms homodimers in trans (molecules expressed by two different cells). Forms promiscuous heterodimers in cis (at the plasma membrane of the same cell) with other protocadherins.

Its subcellular location is the cell membrane. In terms of biological role, calcium-dependent cell-adhesion protein involved in cells self-recognition and non-self discrimination. Thereby, it is involved in the establishment and maintenance of specific neuronal connections in the brain. This is Protocadherin beta-8 from Homo sapiens (Human).